The primary structure comprises 501 residues: Solute carrier family 2, facilitated glucose transporter member 5 (501 aa).

Met1 carries the post-translational modification N-acetylmethionine. Residues 1–18 (MEQQDPIKKEGRLTPVLA) lie on the Cytoplasmic side of the membrane. A helical membrane pass occupies residues 19–39 (LATLIAAFGSSFQYGYNVAAV). Tyr32 lines the D-fructose pocket. Residues 40-68 (NSPAELMKAFYNETHYSRFSEYISEFSLT) are Extracellular-facing. N-linked (GlcNAc...) asparagine glycosylation occurs at Asn51. A helical transmembrane segment spans residues 69-91 (LLWSISVSMFPFGGFVGSLMVGP). Topologically, residues 92-98 (LVNRLGR) are cytoplasmic. A helical transmembrane segment spans residues 99-119 (KGTLLFNNIFSIVPAILMGTS). Topologically, residues 120–126 (KTARSYE) are extracellular. The helical transmembrane segment at 127-149 (MIILSRLLVGICAGLSSNVVPMY) threads the bilayer. The Cytoplasmic portion of the chain corresponds to 150–161 (LGELSPKNLRGA). Residues 162–182 (LGVVPQLFITVGILVAQIVGL) form a helical membrane-spanning segment. Gln167 contacts D-fructose. Residues 183–192 (RSLLATEEGW) lie on the Extracellular side of the membrane. The chain crosses the membrane as a helical span at residues 193 to 213 (PILLGLTAIPAALQLLLLPFF). Residues 214 to 277 (PESPRYLLIQ…MFRMRSLRWQ (64 aa)) are Cytoplasmic-facing. The helical transmembrane segment at 278–298 (VISIIILMGGQQLSGVNAIYY) threads the bilayer. Residues Gln288 and 296-298 (IYY) contribute to the D-fructose site. Over 299-313 (YADQIYLSAGVKDQD) the chain is Extracellular. The chain crosses the membrane as a helical span at residues 314-334 (VQYVTVGTGAVNVLMTICAVF). The Cytoplasmic portion of the chain corresponds to 335 to 342 (VVEYLGRR). A helical membrane pass occupies residues 343-363 (ALLLLGFSVCFIACCVLTVAL). Topologically, residues 364-371 (ALQDRVSW) are extracellular. Residues 372 to 394 (MPYISIVCVISYVIGHALGPSPI) form a helical membrane-spanning segment. His387 is a D-fructose binding site. Topologically, residues 395 to 412 (PALLITEVFLQSSRSAAY) are cytoplasmic. A helical membrane pass occupies residues 413 to 433 (MVGGTVHWLSNFAVGLVFPFI). D-fructose is bound at residue 419–420 (HW). Topologically, residues 434 to 439 (QVGLGA) are extracellular. Residues 440–460 (YSFIIFAVICLLTTIYIFLIV) traverse the membrane as a helical segment. Over 461–501 (PETKGKTFVEINHIFTKMNKVSDVHPAKDELKDIPLSAVEL) the chain is Cytoplasmic.

The protein belongs to the major facilitator superfamily. Sugar transporter (TC 2.A.1.1) family. Glucose transporter subfamily.

Its subcellular location is the apical cell membrane. It localises to the cell membrane. It is found in the sarcolemma. It catalyses the reaction D-fructose(out) = D-fructose(in). In terms of biological role, functions as a fructose transporter that has only low activity with other monosaccharides. Can mediate the uptake of deoxyglucose, but with low efficiency. Essential for fructose uptake in the small intestine. Plays a role in the regulation of salt uptake and blood pressure in response to dietary fructose. Required for the development of high blood pressure in response to high dietary fructose intake. This Equus caballus (Horse) protein is Solute carrier family 2, facilitated glucose transporter member 5.